Reading from the N-terminus, the 347-residue chain is S-adenosylmethionine:tRNA ribosyltransferase-isomerase (347 aa).

The protein belongs to the QueA family. In terms of assembly, monomer.

Its subcellular location is the cytoplasm. The catalysed reaction is 7-aminomethyl-7-carbaguanosine(34) in tRNA + S-adenosyl-L-methionine = epoxyqueuosine(34) in tRNA + adenine + L-methionine + 2 H(+). It functions in the pathway tRNA modification; tRNA-queuosine biosynthesis. Transfers and isomerizes the ribose moiety from AdoMet to the 7-aminomethyl group of 7-deazaguanine (preQ1-tRNA) to give epoxyqueuosine (oQ-tRNA). This chain is S-adenosylmethionine:tRNA ribosyltransferase-isomerase, found in Bordetella pertussis (strain Tohama I / ATCC BAA-589 / NCTC 13251).